The primary structure comprises 88 residues: Small ribosomal subunit protein uS15c (88 aa).

Belongs to the universal ribosomal protein uS15 family. As to quaternary structure, part of the 30S ribosomal subunit.

The protein resides in the plastid. It is found in the chloroplast. The sequence is that of Small ribosomal subunit protein uS15c (rps15) from Calycanthus floridus var. glaucus (Eastern sweetshrub).